The primary structure comprises 258 residues: Imidazole glycerol phosphate synthase subunit HisF (258 aa).

Catalysis depends on residues D11 and D130.

It belongs to the HisA/HisF family. Heterodimer of HisH and HisF.

Its subcellular location is the cytoplasm. The catalysed reaction is 5-[(5-phospho-1-deoxy-D-ribulos-1-ylimino)methylamino]-1-(5-phospho-beta-D-ribosyl)imidazole-4-carboxamide + L-glutamine = D-erythro-1-(imidazol-4-yl)glycerol 3-phosphate + 5-amino-1-(5-phospho-beta-D-ribosyl)imidazole-4-carboxamide + L-glutamate + H(+). It functions in the pathway amino-acid biosynthesis; L-histidine biosynthesis; L-histidine from 5-phospho-alpha-D-ribose 1-diphosphate: step 5/9. Functionally, IGPS catalyzes the conversion of PRFAR and glutamine to IGP, AICAR and glutamate. The HisF subunit catalyzes the cyclization activity that produces IGP and AICAR from PRFAR using the ammonia provided by the HisH subunit. In Shigella flexneri serotype 5b (strain 8401), this protein is Imidazole glycerol phosphate synthase subunit HisF.